The sequence spans 217 residues: Adenylate kinase (217 aa).

ATP is bound at residue 10-15 (GAGKGT). The interval 30-59 (STGDMLREAVAKGTELGKKAKEYMDKGELV) is NMP. AMP is bound by residues T31, R36, 57–59 (ELV), 85–88 (GFPR), and Q92. The LID stretch occupies residues 126–163 (YRRTCRNCGAVYHLIYAPPKEDNKCDKCGGELYQRDDD). An ATP-binding site is contributed by R127. Zn(2+) contacts are provided by C130 and C133. 136–137 (VY) is a binding site for ATP. Zn(2+) contacts are provided by C150 and C153. AMP is bound by residues R160 and R171. K199 provides a ligand contact to ATP.

This sequence belongs to the adenylate kinase family. Monomer.

The protein resides in the cytoplasm. It carries out the reaction AMP + ATP = 2 ADP. The protein operates within purine metabolism; AMP biosynthesis via salvage pathway; AMP from ADP: step 1/1. Catalyzes the reversible transfer of the terminal phosphate group between ATP and AMP. Plays an important role in cellular energy homeostasis and in adenine nucleotide metabolism. In Archaeoglobus fulgidus (strain ATCC 49558 / DSM 4304 / JCM 9628 / NBRC 100126 / VC-16), this protein is Adenylate kinase.